The chain runs to 332 residues: Putative integrase/recombinase y4rC (332 aa).

Positions 5–98 constitute a Core-binding (CB) domain; it reads ASLAPLLESF…AIHSFFRYAA (94 aa). In terms of domain architecture, Tyr recombinase spans 122-307; sequence TLVNFLTRPE…TLAMKEAALA (186 aa). Catalysis depends on residues Arg162, Lys187, His259, Arg262, and His285. The O-(3'-phospho-DNA)-tyrosine intermediate role is filled by Tyr294.

Belongs to the 'phage' integrase family.

This Sinorhizobium fredii (strain NBRC 101917 / NGR234) protein is Putative integrase/recombinase y4rC.